The sequence spans 623 residues: Alpha-1,2-mannosyltransferase Alg9 (623 aa).

Transmembrane regions (helical) follow at residues 152 to 172 (LIFY…ERYM), 193 to 223 (LFSV…AAWW), 229 to 254 (FAIF…PLVL), 266 to 284 (FVQW…MIAI), 326 to 348 (FLNF…IDYL), 360 to 378 (FPHY…VFFA), 390 to 410 (IYPL…RIFF), and 431 to 452 (FIAI…FALY).

This sequence belongs to the glycosyltransferase 22 family.

Its subcellular location is the endoplasmic reticulum membrane. The catalysed reaction is an alpha-D-Man-(1-&gt;2)-alpha-D-Man-(1-&gt;2)-alpha-D-Man-(1-&gt;3)-[alpha-D-Man-(1-&gt;3)-alpha-D-Man-(1-&gt;6)]-beta-D-Man-(1-&gt;4)-beta-D-GlcNAc-(1-&gt;4)-alpha-D-GlcNAc-diphospho-di-trans,poly-cis-dolichol + a di-trans,poly-cis-dolichyl beta-D-mannosyl phosphate = an alpha-D-Man-(1-&gt;2)-alpha-D-Man-(1-&gt;2)-alpha-D-Man-(1-&gt;3)-[alpha-D-Man-(1-&gt;2)-alpha-D-Man-(1-&gt;3)-alpha-D-Man-(1-&gt;6)]-beta-D-Man-(1-&gt;4)-beta-D-GlcNAc-(1-&gt;4)-alpha-D-GlcNAc-diphospho-di-trans,poly-cis-dolichol + a di-trans,poly-cis-dolichyl phosphate + H(+). The enzyme catalyses an alpha-D-Man-(1-&gt;2)-alpha-D-Man-(1-&gt;2)-alpha-D-Man-(1-&gt;3)-[alpha-D-Man-(1-&gt;2)-alpha-D-Man-(1-&gt;3)-[alpha-D-Man-(1-&gt;6)]-alpha-D-Man-(1-&gt;6)]-beta-D-Man-(1-&gt;4)-beta-D-GlcNAc-(1-&gt;4)-alpha-D-GlcNAc-diphospho-di-trans,poly-cis-dolichol + a di-trans,poly-cis-dolichyl beta-D-mannosyl phosphate = an alpha-D-Man-(1-&gt;2)-alpha-D-Man-(1-&gt;2)-alpha-D-Man-(1-&gt;3)-[alpha-D-Man-(1-&gt;2)-alpha-D-Man-(1-&gt;3)-[alpha-D-Man-(1-&gt;2)-alpha-D-Man-(1-&gt;6)]-alpha-D-Man-(1-&gt;6)]-beta-D-Man-(1-&gt;4)-beta-D-GlcNAc-(1-&gt;4)-alpha-D-GlcNAc-diphospho-di-trans,poly-cis-dolichol + a di-trans,poly-cis-dolichyl phosphate + H(+). The protein operates within protein modification; protein glycosylation. Its function is as follows. Probable alpha-1,2-mannosyltransferase involved in the N-glycosylation pathway. Probably involved in glycosylation of the TNF receptor grnd, regulating its ligand affinity. Required for normal epithelial growth and architecture. Suppressor of JNK-dependent intestinal stem cell proliferation. The protein is Alpha-1,2-mannosyltransferase Alg9 of Drosophila melanogaster (Fruit fly).